The chain runs to 308 residues: Probable GTP 3',8-cyclase (308 aa).

A Radical SAM core domain is found at 4–224; that stretch reads RFGRPLEDLR…QIRKKHFRPR (221 aa). A GTP-binding site is contributed by R13. Positions 20, 24, and 27 each coordinate [4Fe-4S] cluster. K60 lines the GTP pocket. G64 contributes to the S-adenosyl-L-methionine binding site. Position 90 (T90) interacts with GTP. S114 provides a ligand contact to S-adenosyl-L-methionine. Residue K151 participates in GTP binding. Residues C245 and C248 each contribute to the [4Fe-4S] cluster site. 250 to 252 provides a ligand contact to GTP; that stretch reads RIR. C262 contributes to the [4Fe-4S] cluster binding site.

It belongs to the radical SAM superfamily. MoaA family. The cofactor is [4Fe-4S] cluster.

The catalysed reaction is GTP + AH2 + S-adenosyl-L-methionine = (8S)-3',8-cyclo-7,8-dihydroguanosine 5'-triphosphate + 5'-deoxyadenosine + L-methionine + A + H(+). Its pathway is cofactor biosynthesis; molybdopterin biosynthesis. In terms of biological role, catalyzes the cyclization of GTP to (8S)-3',8-cyclo-7,8-dihydroguanosine 5'-triphosphate. The sequence is that of Probable GTP 3',8-cyclase from Saccharolobus islandicus (strain Y.N.15.51 / Yellowstone #2) (Sulfolobus islandicus).